The primary structure comprises 356 residues: Arginine kinase (356 aa).

Ala-2 carries the N-acetylalanine modification. One can recognise a Phosphagen kinase N-terminal domain in the interval 9 to 91 (KLEEGFKKLE…FDPIIEDYHK (83 aa)). Residue 64-68 (GVGIY) participates in L-arginine binding. Residues 119-356 (FVISTRVRCG…LELIKIEKEM (238 aa)) form the Phosphagen kinase C-terminal domain. ATP is bound by residues 122–126 (STRVR) and His-185. An L-arginine-binding site is contributed by Glu-225. Residue Arg-229 participates in ATP binding. Cys-271 is a binding site for L-arginine. ATP is bound by residues 280-284 (RASVH) and 309-314 (RGTRGE). Residue Glu-314 participates in L-arginine binding.

This sequence belongs to the ATP:guanido phosphotransferase family.

The catalysed reaction is L-arginine + ATP = N(omega)-phospho-L-arginine + ADP + H(+). This chain is Arginine kinase, found in Homarus gammarus (European lobster).